An 880-amino-acid polypeptide reads, in one-letter code: DNA gyrase subunit A (880 aa).

The region spanning 35-530 (LPDVRDGLKP…ASGDIDLEDL (496 aa)) is the Topo IIA-type catalytic domain. The O-(5'-phospho-DNA)-tyrosine intermediate role is filled by tyrosine 123. The GyrA-box signature appears at 557–563 (QRRGGKG).

Belongs to the type II topoisomerase GyrA/ParC subunit family. Heterotetramer, composed of two GyrA and two GyrB chains. In the heterotetramer, GyrA contains the active site tyrosine that forms a transient covalent intermediate with DNA, while GyrB binds cofactors and catalyzes ATP hydrolysis.

The protein resides in the cytoplasm. The catalysed reaction is ATP-dependent breakage, passage and rejoining of double-stranded DNA.. In terms of biological role, a type II topoisomerase that negatively supercoils closed circular double-stranded (ds) DNA in an ATP-dependent manner to modulate DNA topology and maintain chromosomes in an underwound state. Negative supercoiling favors strand separation, and DNA replication, transcription, recombination and repair, all of which involve strand separation. Also able to catalyze the interconversion of other topological isomers of dsDNA rings, including catenanes and knotted rings. Type II topoisomerases break and join 2 DNA strands simultaneously in an ATP-dependent manner. The chain is DNA gyrase subunit A from Haemophilus influenzae (strain ATCC 51907 / DSM 11121 / KW20 / Rd).